The following is a 357-amino-acid chain: DNA polymerase IV (357 aa).

The UmuC domain maps to 4-185; that stretch reads IIHVDMDCYF…LSLRQIPGVG (182 aa). The Mg(2+) site is built by aspartate 8 and aspartate 103. Glutamate 104 is an active-site residue.

This sequence belongs to the DNA polymerase type-Y family. In terms of assembly, monomer. It depends on Mg(2+) as a cofactor.

Its subcellular location is the cytoplasm. It carries out the reaction DNA(n) + a 2'-deoxyribonucleoside 5'-triphosphate = DNA(n+1) + diphosphate. Functionally, poorly processive, error-prone DNA polymerase involved in untargeted mutagenesis. Copies undamaged DNA at stalled replication forks, which arise in vivo from mismatched or misaligned primer ends. These misaligned primers can be extended by PolIV. Exhibits no 3'-5' exonuclease (proofreading) activity. May be involved in translesional synthesis, in conjunction with the beta clamp from PolIII. The protein is DNA polymerase IV of Shewanella oneidensis (strain ATCC 700550 / JCM 31522 / CIP 106686 / LMG 19005 / NCIMB 14063 / MR-1).